The sequence spans 341 residues: S-adenosylmethionine:tRNA ribosyltransferase-isomerase (341 aa).

It belongs to the QueA family. In terms of assembly, monomer.

It is found in the cytoplasm. The catalysed reaction is 7-aminomethyl-7-carbaguanosine(34) in tRNA + S-adenosyl-L-methionine = epoxyqueuosine(34) in tRNA + adenine + L-methionine + 2 H(+). It participates in tRNA modification; tRNA-queuosine biosynthesis. In terms of biological role, transfers and isomerizes the ribose moiety from AdoMet to the 7-aminomethyl group of 7-deazaguanine (preQ1-tRNA) to give epoxyqueuosine (oQ-tRNA). The protein is S-adenosylmethionine:tRNA ribosyltransferase-isomerase of Staphylococcus haemolyticus (strain JCSC1435).